The sequence spans 196 residues: Ribosome maturation factor RimP (196 aa).

The interval leucine 164–glutamate 196 is disordered. Residues glycine 173–lysine 182 are compositionally biased toward basic residues.

It belongs to the RimP family.

Its subcellular location is the cytoplasm. Its function is as follows. Required for maturation of 30S ribosomal subunits. This Xanthomonas campestris pv. campestris (strain B100) protein is Ribosome maturation factor RimP.